We begin with the raw amino-acid sequence, 374 residues long: Anhydro-N-acetylmuramic acid kinase (374 aa).

An ATP-binding site is contributed by 12–19; sequence GTSLDGVD.

This sequence belongs to the anhydro-N-acetylmuramic acid kinase family.

It carries out the reaction 1,6-anhydro-N-acetyl-beta-muramate + ATP + H2O = N-acetyl-D-muramate 6-phosphate + ADP + H(+). Its pathway is amino-sugar metabolism; 1,6-anhydro-N-acetylmuramate degradation. It participates in cell wall biogenesis; peptidoglycan recycling. Its function is as follows. Catalyzes the specific phosphorylation of 1,6-anhydro-N-acetylmuramic acid (anhMurNAc) with the simultaneous cleavage of the 1,6-anhydro ring, generating MurNAc-6-P. Is required for the utilization of anhMurNAc either imported from the medium or derived from its own cell wall murein, and thus plays a role in cell wall recycling. In Salmonella arizonae (strain ATCC BAA-731 / CDC346-86 / RSK2980), this protein is Anhydro-N-acetylmuramic acid kinase.